The sequence spans 135 residues: Peptidyl-prolyl cis-trans isomerase FPR2 (135 aa).

Positions 1–17 (MMFNIYLFVTFFSTILA) are cleaved as a signal peptide. The PPIase FKBP-type domain occupies 43 to 132 (GDKVKVHYTG…VFDVELVDVK (90 aa)).

This sequence belongs to the FKBP-type PPIase family. FKBP2 subfamily.

Its subcellular location is the endoplasmic reticulum membrane. It carries out the reaction [protein]-peptidylproline (omega=180) = [protein]-peptidylproline (omega=0). Inhibited by both FK506 and rapamycin. Binds FK506 with 15-fold lower affinity than FKB1. Functionally, PPIases accelerate the folding of proteins. It catalyzes the cis-trans isomerization of proline imidic peptide bonds in oligopeptides. FKBP-13 may play a role in protein trafficking in the ER. The sequence is that of Peptidyl-prolyl cis-trans isomerase FPR2 (FPR2) from Saccharomyces cerevisiae (strain ATCC 204508 / S288c) (Baker's yeast).